Reading from the N-terminus, the 370-residue chain is D-aspartate oxidase (370 aa).

Isoleucine 15, alanine 49, serine 50, glycine 54, valine 166, arginine 317, glycine 346, and glutamine 348 together coordinate FAD. Residues 368–370 (ARL) carry the Microbody targeting signal motif.

It belongs to the DAMOX/DASOX family. In terms of assembly, homotetramer. Requires FAD as cofactor.

It localises to the peroxisome matrix. The catalysed reaction is D-aspartate + O2 + H2O = oxaloacetate + H2O2 + NH4(+). It catalyses the reaction D-glutamate + O2 + H2O = H2O2 + 2-oxoglutarate + NH4(+). Inhibited by malonate and D-malate. Very mildly inhibited by benzoate, ethylenediaminetetraacetic acid (EDTA), crotonate and anthranilate. May be very mildly inhibited by meso-tartrate. In terms of biological role, selectively catalyzes the oxidative deamination of acidic amino acids. Protects the organism from the toxicity of D-amino acids. Enables the organism to utilize D-amino acids as a source of nutrients. Enables the organism to utilize D-aspartate as a source of nitrogen and carbon. In Vanrija humicola (Yeast), this protein is D-aspartate oxidase.